A 490-amino-acid chain; its full sequence is Zinc finger protein STP4 (490 aa).

Low complexity-rich tracts occupy residues 1–16 (MLVS…SVMS) and 52–73 (PSLP…STLN). The disordered stretch occupies residues 1 to 85 (MLVSSSFASS…PPPPLTTSYS (85 aa)). Residues Ser153 and Ser155 each carry the phosphoserine modification. Residues 231 to 247 (QQQQQLNSSSSASALPS) are compositionally biased toward low complexity. Residues 231–273 (QQQQQLNSSSSASALPSIHSPLTNEHTSRYSSSLKDSAKITKQ) form a disordered region. Residues 250–265 (SPLTNEHTSRYSSSLK) show a composition bias toward polar residues. Residues 304 to 326 (HKCPICQRGFARNNDLIRHKKRH) form a C2H2-type zinc finger. The interval 338–375 (ESDNNSGADDQDDTARTSANNDSDDSNDKLAASSSSEE) is disordered.

The protein localises to the cytoplasm. It localises to the mitochondrion. The protein resides in the nucleus. The sequence is that of Zinc finger protein STP4 (STP4) from Saccharomyces cerevisiae (strain ATCC 204508 / S288c) (Baker's yeast).